Here is a 237-residue protein sequence, read N- to C-terminus: Ribosomal RNA small subunit methyltransferase G (237 aa).

S-adenosyl-L-methionine contacts are provided by residues glycine 76, phenylalanine 81, 128-129 (IE), and arginine 147.

The protein belongs to the methyltransferase superfamily. RNA methyltransferase RsmG family.

The protein resides in the cytoplasm. In terms of biological role, specifically methylates the N7 position of a guanine in 16S rRNA. In Prochlorococcus marinus (strain MIT 9301), this protein is Ribosomal RNA small subunit methyltransferase G.